We begin with the raw amino-acid sequence, 1022 residues long: Translation initiation factor IF-2 (1022 aa).

Residues 82–94 (EQSRKTLEKEQHL) are compositionally biased toward basic and acidic residues. Disordered regions lie at residues 82–129 (EQSR…AVPA) and 342–436 (SENK…QREL). Residues 104-115 (ASKSSAKGSESA) show a composition bias toward low complexity. A compositionally biased stretch (basic residues) spans 375–384 (KAKKGKKKKK). Over residues 421–436 (SEREREQEEGAAQREL) the composition is skewed to basic and acidic residues. The region spanning 519–689 (TRPPVVTIMG…LTEAELRELK (171 aa)) is the tr-type G domain. Residues 528–535 (GHVDHGKT) are G1. 528-535 (GHVDHGKT) contacts GTP. Residues 553–557 (GITQH) are G2. Residues 575–578 (DTPG) are G3. GTP contacts are provided by residues 575–579 (DTPGH) and 629–632 (NKID). Residues 629–632 (NKID) are G4. Positions 665 to 667 (SAK) are G5.

It belongs to the TRAFAC class translation factor GTPase superfamily. Classic translation factor GTPase family. IF-2 subfamily.

Its subcellular location is the cytoplasm. One of the essential components for the initiation of protein synthesis. Protects formylmethionyl-tRNA from spontaneous hydrolysis and promotes its binding to the 30S ribosomal subunits. Also involved in the hydrolysis of GTP during the formation of the 70S ribosomal complex. This chain is Translation initiation factor IF-2, found in Chlorobium chlorochromatii (strain CaD3).